The following is a 155-amino-acid chain: Small ribosomal subunit protein uS7c (155 aa).

Belongs to the universal ribosomal protein uS7 family. Part of the 30S ribosomal subunit.

Its subcellular location is the plastid. It is found in the chloroplast. One of the primary rRNA binding proteins, it binds directly to 16S rRNA where it nucleates assembly of the head domain of the 30S subunit. The sequence is that of Small ribosomal subunit protein uS7c (rps7) from Typha angustifolia (Narrow leaf cattail).